A 459-amino-acid chain; its full sequence is Cysteine--tRNA ligase (459 aa).

Residue Cys28 coordinates Zn(2+). Positions 30–40 match the 'HIGH' region motif; the sequence is VTIYDLCHIGH. Zn(2+) is bound by residues Cys209, His234, and Glu238. The 'KMSKS' region signature appears at 266 to 270; the sequence is KMSKS. ATP is bound at residue Lys269.

Belongs to the class-I aminoacyl-tRNA synthetase family. As to quaternary structure, monomer. The cofactor is Zn(2+).

The protein resides in the cytoplasm. The enzyme catalyses tRNA(Cys) + L-cysteine + ATP = L-cysteinyl-tRNA(Cys) + AMP + diphosphate. The protein is Cysteine--tRNA ligase of Shewanella baltica (strain OS195).